Here is a 621-residue protein sequence, read N- to C-terminus: Leucine aminopeptidase (621 aa).

The propeptide occupies 1 to 73 (MPLLRSSQHI…ISNRKEFRKM (73 aa)). The tract at residues 129 to 152 (SSSGGSGGNGGSAGSSGNGEGGAQ) is disordered. Residues 132-150 (GGSGGNGGSAGSSGNGEGG) show a composition bias toward gly residues. 3 residues coordinate a peptide: K390, D395, and K402. Residues K390 and D395 each contribute to the Zn(2+) site. The L13 loop stretch occupies residues 400 to 417 (NLKAAPGSMIDLMKFDMS). The active site involves K402. Zn(2+) contacts are provided by D410, M412, D415, D475, and E477. A peptide is bound by residues D415 and D475. R479 is an active-site residue.

It belongs to the peptidase M17 family. Homohexamer composed of dimer of trimers. Both the identity and concentration of metal ions available dictate the extent to which oligomerization occurs; Mn(2+) and Co(2+) induces oligomerization, whereas Mg(2+) has no effect, and Zn(2+) causes irreversible protein aggregation in vitro. The cofactor is Zn(2+).

The protein localises to the cytoplasm. The catalysed reaction is Release of an N-terminal amino acid, Xaa-|-Yaa-, in which Xaa is preferably Leu, but may be other amino acids including Pro although not Arg or Lys, and Yaa may be Pro. Amino acid amides and methyl esters are also readily hydrolyzed, but rates on arylamides are exceedingly low.. The enzyme catalyses L-cysteinylglycine + H2O = L-cysteine + glycine. With respect to regulation, oligomerization is required for catalytic activity and is metal-dependent. The type of metal that binds the 2 metal binding sites influences catalytic activity and substrate specificity. In vitro, activated by Co(2+), Mn(2+), Ni(2+), Mg(2+) and Zn(2+) with decreasing strength. Occupancy of the site 2 is essential and sufficient for activating the enzyme but occupation of the 2 sites is necessary for full catalytic activity. Inhibited by Ca(2+). Inhibited by fungal metabolite bestatin. Its function is as follows. Aminopeptidase which preferentially cleaves leucine residues from the N-terminus of peptides. Also, has some activity towards tryptophan and methionine and has very low activity towards alanine, arginine, asparagine, phenylalanine and tyrosine. No activity towards histidine, serine, valine, isoleucine, glycine, aspartic acid and glutamic acid. In addition, cleaves the Cys-Gly dipeptide, probably as part of the glutathione regulation pathway; cleavage only occurs in the presence of Mn(2+). Plays a role in the final step of host hemoglobin catabolism, by cleaving hemoglobin-derived oligopeptides providing a source of amino acids for the parasite protein synthesis and for the maintenance of osmotic homeostasis. The protein is Leucine aminopeptidase of Plasmodium vivax (strain Salvador I).